Here is a 395-residue protein sequence, read N- to C-terminus: Renin (395 aa).

The signal sequence occupies residues 1–21 (MLQSWEFVLLISCFLCFSSDA). A propeptide spans 22–43 (LQRISLKKMPSIRETLQEMGMK) (activation peptide). Asn64 is a glycosylation site (N-linked (GlcNAc...) asparagine). In terms of domain architecture, Peptidase A1 spans 79–392 (YYGEISIGTP…DRQNNRIGFA (314 aa)). Asp97 is an active-site residue. Cystine bridges form between Cys110/Cys117 and Cys274/Cys278. Asp283 is an active-site residue. Cys316 and Cys351 are disulfide-bonded.

It belongs to the peptidase A1 family. N-glycosylated. In terms of tissue distribution, expressed by the venom gland (at protein level).

The protein localises to the secreted. It catalyses the reaction Cleavage of Leu-|-Xaa bond in angiotensinogen to generate angiotensin I.. Inhibited completely by aspartyl protease inhibitor pepstatin A, but not by the serine- or metalloproteinase inhibitors PMSF or EDTA. Renin is a highly specific endopeptidase, whose only known function is to generate angiotensin I from angiotensinogen in the plasma, initiating a cascade of reactions that produce an elevation of blood pressure and increased sodium retention by the kidney. This protein is also found in snake venom and shown to specifically cleave human and porcine angiotensinogen into angiotensin I. It does not have general protease activity, no cleavage of alpha or beta casein. May be directly responsible for elevation of blood pressure in the victims of envenomation. This chain is Renin, found in Echis ocellatus (Ocellated saw-scaled viper).